The following is a 403-amino-acid chain: MGFFGRLFGSKKKSDKAASSRDKRRWSFTTRSSNSSKRAPAVTSASVVEQNGLDADKHAIAVAAATAAVAEAALTAAHAAAEVVRLTSGNGGRNVGGGGNSSVFQIGRSNRRWAQENIAAMKIQSAFRGYLARRALRALKALVKLQALVRGHIVRKQTADMLRRMQTLVRLQSQARARASRSSHSSASFHSSTALLFPSSSSSPRSLHTRCVSNAEVSSLDHRGGSKRLDWQAEESENGDKILEVDTWKPHYHPKPLRSERNNESPRKRQQSLLGPRSTENSPQVGSSGSRRRTPFTPTSRSEYSWGCNNYYYSGYHPNYMANTESYKAKVRSQSAPKQRVEVSNETSGYKRSVQGQYYYYTAVEEESLDVGSAGYYGGGGGDSDRLNRNQSAKSRMHSSFLV.

Positions M1–T43 are disordered. The Nuclear localization signal signature appears at S10–A17. Residues S27 to T43 show a composition bias toward polar residues. The segment at Q115–R133 is calmodulin-binding. IQ domains follow at residues E116–K144 and L145–T167. Disordered regions lie at residues R176–H208, I242–R301, and G381–V403. Residues L257 to R267 show a composition bias toward basic and acidic residues.

It belongs to the IQD family. Binds to multiple calmodulin (CaM) in the presence of Ca(2+) and CaM-like proteins.

It is found in the nucleus. The protein resides in the nucleolus. The protein localises to the cytoplasm. It localises to the cytoskeleton. Its subcellular location is the cell membrane. Functionally, may be involved in cooperative interactions with calmodulins or calmodulin-like proteins. Recruits calmodulin proteins to microtubules, thus being a potential scaffold in cellular signaling and trafficking. May associate with nucleic acids and regulate gene expression at the transcriptional or post-transcriptional level. The protein is Protein IQ-DOMAIN 23 of Arabidopsis thaliana (Mouse-ear cress).